The chain runs to 331 residues: Zinc finger protein 660 (331 aa).

Positions 1 to 12 (MRRKTRNFKHKT) are enriched in basic residues. Positions 1 to 35 (MRRKTRNFKHKTVKDNKVLTEGSDQESEKDNSQCC) are disordered. Phosphoserine is present on Ser23. C2H2-type zinc fingers lie at residues 50 to 72 (YVCT…ERIH), 78 to 100 (YKCK…RRIH), 106 to 128 (YTCS…QGIH), 134 to 156 (YECK…HRVH), 162 to 184 (YSCI…QRMH), 190 to 212 (YKCK…QRIH), 218 to 240 (YECD…QRLH), 246 to 268 (YKCN…QRVH), 274 to 296 (YKCN…LRTH), and 302 to 324 (YKCS…QRKH).

The protein belongs to the krueppel C2H2-type zinc-finger protein family.

It is found in the nucleus. In terms of biological role, may be involved in transcriptional regulation. This is Zinc finger protein 660 (ZNF660) from Homo sapiens (Human).